Here is a 23-residue protein sequence, read N- to C-terminus: Dermaseptin III-like peptide (23 aa).

As to expression, expressed by the skin glands.

The protein resides in the secreted. Functionally, possesses a potent antimicrobial activity against bacteria, fungi and protozoa. Probably acts by disturbing membrane functions with its amphipathic structure. The sequence is that of Dermaseptin III-like peptide from Phyllomedusa burmeisteri (Brazilian common walking leaf frog).